Here is a 728-residue protein sequence, read N- to C-terminus: Meiotic sister-chromatid recombination protein 3 (728 aa).

Disordered regions lie at residues Q33–Q171, N236–E261, P300–A335, S363–N403, S422–G454, V495–L514, and Y561–R728. Residues S35–S46 show a composition bias toward low complexity. Positions D48–L58 are enriched in polar residues. S57 and S64 each carry phosphoserine. The span at S80 to A93 shows a compositional bias: low complexity. Composition is skewed to polar residues over residues Q95–Q106, Y118–A132, and K140–Q171. 3 positions are modified to phosphoserine: S127, S151, and S155. Positions H251 to E261 are enriched in basic and acidic residues. Residues I309 to P326 show a composition bias toward basic residues. S363 bears the Phosphoserine mark. Polar residues-rich tracts occupy residues S363 to N373 and T385 to N403. Positions E590 to N634 are enriched in polar residues. Over residues V635 to T646 the composition is skewed to low complexity. The residue at position 646 (T646) is a Phosphothreonine. Polar residues-rich tracts occupy residues N654–Q668, D675–L684, and M691–P708. S660 carries the phosphoserine modification. A compositionally biased stretch (basic residues) spans K711–R728.

It localises to the cell membrane. Functionally, may be involved in the control of meiotic sister-chromatid recombination. The polypeptide is Meiotic sister-chromatid recombination protein 3 (MSC3) (Saccharomyces cerevisiae (strain ATCC 204508 / S288c) (Baker's yeast)).